Consider the following 193-residue polypeptide: dCTP deaminase (193 aa).

Residues arginine 110 to arginine 115, aspartate 128, valine 136 to glutamate 138, tyrosine 171, lysine 178, and glutamine 182 each bind dCTP. Residue glutamate 138 is the Proton donor/acceptor of the active site.

This sequence belongs to the dCTP deaminase family. In terms of assembly, homotrimer.

It catalyses the reaction dCTP + H2O + H(+) = dUTP + NH4(+). It participates in pyrimidine metabolism; dUMP biosynthesis; dUMP from dCTP (dUTP route): step 1/2. In terms of biological role, catalyzes the deamination of dCTP to dUTP. The protein is dCTP deaminase of Aeromonas salmonicida (strain A449).